The primary structure comprises 307 residues: 2-dehydropantoate 2-reductase (307 aa).

Residues 7 to 12 (GSGAMG), N102, and A128 each bind NADP(+). N102 is a binding site for substrate. K184 acts as the Proton donor in catalysis. The substrate site is built by N188, N192, and S255. E268 contributes to the NADP(+) binding site.

This sequence belongs to the ketopantoate reductase family.

The protein resides in the cytoplasm. The catalysed reaction is (R)-pantoate + NADP(+) = 2-dehydropantoate + NADPH + H(+). The protein operates within cofactor biosynthesis; (R)-pantothenate biosynthesis; (R)-pantoate from 3-methyl-2-oxobutanoate: step 2/2. Functionally, catalyzes the NADPH-dependent reduction of ketopantoate into pantoic acid. In Streptococcus pyogenes serotype M1, this protein is 2-dehydropantoate 2-reductase (apbA).